Reading from the N-terminus, the 237-residue chain is Lectin alpha chain (237 aa).

Mn(2+) is bound by residues Glu8 and Asp10. Residues Asp10, Tyr12, Asn14, and Asp19 each contribute to the Ca(2+) site. Tyr12 serves as a coordination point for a carbohydrate. The Mn(2+) site is built by Asp19, His24, and Ser34. 99-100 (LY) contributes to the a carbohydrate binding site. Asp208 provides a ligand contact to Ca(2+). Arg228 is an a carbohydrate binding site.

The protein belongs to the leguminous lectin family. In terms of assembly, equilibrium between homodimer and homotetramer. Oligomerization is pH-dependent with homotetramers forming at pH 6.5 and above. The beta and gamma chains are produced by partial proteolytic processing of the lectin alpha chain by an asparaginyl endopeptidase. Mixture of 60% alpha lectin and 40% of its beta and gamma proteolytic fragments.

D-mannose/D-glucose-binding lectin. Has anti-inflammatory activity in rats. Induces histamine release in mast cells from rat. Induces lymphocyte proliferation and IFNG production. The polypeptide is Lectin alpha chain (Dioclea guianensis).